The sequence spans 2430 residues: Transcription factor HIVEP2 (2430 aa).

Residues 1–127 (MDTGDTALGQ…SLEGPPWLFP (127 aa)) form a disordered region. Composition is skewed to polar residues over residues 11–22 (KATSRSGETDSV) and 96–110 (HSLS…QGMT). 2 consecutive C2H2-type zinc fingers follow at residues 189 to 211 (YICP…IRSH) and 217 to 239 (YPCI…RKSH). 3 disordered regions span residues 271–302 (IHSD…PPVP), 374–418 (SEKK…NTNA), and 744–995 (AHGH…SGKH). Positions 381–418 (SEPSLNLLSPHSKGSTDSGYFSRSESAEQQISPPNTNA) are enriched in polar residues. Basic and acidic residues-rich tracts occupy residues 744-753 (AHGHSDRLDP) and 775-784 (DPDKMTDLGK). Residues 792–804 (SVIQHTNSLSRPN) show a composition bias toward polar residues. S811 is modified (phosphoserine). Residues 853 to 863 (SKPTPSQQVPQ) show a composition bias toward polar residues. Positions 884 to 908 (RVTEEPDKPEKEKEAPTKEPEKPVE) are enriched in basic and acidic residues. Residues 929 to 935 (PKKKRLR) carry the Nuclear localization signal motif. Phosphoserine is present on residues S942, S947, S1040, S1431, and S1435. The span at 944-974 (GESSFESTGTGLSRSPSQESNLSHSSSFSMS) shows a compositional bias: low complexity. The interval 1472-1584 (KKGLSRPQKP…GGQQEEEGKA (113 aa)) is disordered. Low complexity-rich tracts occupy residues 1499–1520 (SRSS…SASG) and 1560–1569 (SDMSMSPQSS). C2H2-type zinc fingers lie at residues 1783 to 1805 (YICE…IRTH) and 1811 to 1835 (YVCK…SKAH). Disordered stretches follow at residues 1848–1931 (SVDD…SSLP) and 1986–2117 (FQSK…SPRR). Residues 1850–1860 (DDTETEEAENM) show a composition bias toward acidic residues. The segment covering 1861 to 1871 (EELHKTSEKHS) has biased composition (basic and acidic residues). Acidic residues predominate over residues 1883-1909 (DAEESDGEDGDDNDDDDEDDDDFDDQG). Residues 1991–2001 (TDSEPDKDRLD) are compositionally biased toward basic and acidic residues. A compositionally biased stretch (low complexity) spans 2013-2037 (SSEPSSSPRDFSPSSYRSSPGYDSS). Repeat copies occupy residues 2037-2040 (SPCR), 2043-2046 (SPKR), 2055-2058 (SPRR), 2067-2070 (SPMR), 2073-2076 (SPRK), 2090-2093 (SPRR), 2096-2099 (SPRR), 2102-2105 (SPGK), 2114-2117 (SPRR), and 2129-2132 (SPRR). The tract at residues 2037–2132 (SPCRDNSPKR…TTIRAPSPRR (96 aa)) is 10 X 4 AA tandem repeats of S-P-[RGMKC]-[RK]. The segment covering 2062–2085 (PRRDLSPMRHLSPRKEAALRREMS) has biased composition (basic and acidic residues). Residue S2102 is modified to Phosphoserine. The segment covering 2107 to 2116 (ITARRDLSPR) has biased composition (basic and acidic residues). Disordered stretches follow at residues 2226 to 2252 (PALS…GAPG), 2268 to 2309 (KQAP…QEEN), and 2352 to 2430 (SIRH…NQLH). The segment covering 2271 to 2289 (PQVLQSSGLPSSPSSPRLL) has biased composition (low complexity). Phosphoserine is present on residues S2281 and S2285. Polar residues predominate over residues 2291 to 2301 (KQSTSEDSLNS). Residues 2371 to 2380 (PDLHDGEKDT) show a composition bias toward basic and acidic residues. Residues 2406-2417 (FQSSKELSLSTE) are compositionally biased toward polar residues. Phosphoserine occurs at positions 2413 and 2415.

As to quaternary structure, interacts with TCF4. Expressed in heart, lung, skeletal muscle and liver. In the brain expressed in cerebral cortex, hippocampus, corpora amygdala and cerebellar cortex.

Its subcellular location is the nucleus. In terms of biological role, specifically binds to the DNA sequence 5'-GGGACTTTCC-3' which is found in the enhancer elements of numerous viral promoters such as those of SV40, CMV, or HIV1. In addition, related sequences are found in the enhancer elements of a number of cellular promoters, including those of the class I MHC, interleukin-2 receptor, somatostatin receptor II, and interferon-beta genes. It may act in T-cell activation. This Mus musculus (Mouse) protein is Transcription factor HIVEP2 (Hivep2).